Here is a 188-residue protein sequence, read N- to C-terminus: Quinone reductase (188 aa).

FMN is bound by residues 13 to 20 (SLRKGSFN), 82 to 85 (EYNY), and S117.

It belongs to the SsuE family. In terms of assembly, homotetramer. Dimer of dimers. The tetrameric configuration has a central role in chromate reductase activity. FMN serves as cofactor.

It carries out the reaction a quinone + NADH + H(+) = a quinol + NAD(+). It catalyses the reaction a quinone + NADPH + H(+) = a quinol + NADP(+). The enzyme catalyses Cr(6+) + 2 NADH + O2 = Cr(3+) + superoxide + 2 NAD(+) + 2 H(+). The catalysed reaction is Cr(6+) + 2 NADPH + O2 = Cr(3+) + superoxide + 2 NADP(+) + 2 H(+). Functionally, catalyzes the reduction of quinones. Acts by simultaneous two-electron transfer, avoiding formation of highly reactive semiquinone intermediates and producing quinols that promote tolerance of H(2)O(2). Quinone reduction is probably the primary biological role of ChrR. Can also reduce toxic chromate to insoluble and less toxic Cr(3+). Catalyzes the transfer of three electrons to Cr(6+) producing Cr(3+) and one electron to molecular oxygen without producing the toxic Cr(5+) species and only producing a minimal amount of reactive oxygen species (ROS). Chromate reduction protects the cell against chromate toxicity, but is likely a secondary activity. The protein is Quinone reductase (chrR) of Escherichia coli O157:H7.